The sequence spans 159 residues: 2-C-methyl-D-erythritol 2,4-cyclodiphosphate synthase (159 aa).

Asp-10 and His-12 together coordinate a divalent metal cation. 4-CDP-2-C-methyl-D-erythritol 2-phosphate is bound by residues 10 to 12 and 36 to 37; these read DVH and HS. Residue His-44 coordinates a divalent metal cation. Residues 58–60, 63–67, 102–108, 134–137, Phe-141, and Arg-144 each bind 4-CDP-2-C-methyl-D-erythritol 2-phosphate; these read DIG, FPDTD, AQAPRMA, and TTSE.

Belongs to the IspF family. As to quaternary structure, homotrimer. Requires a divalent metal cation as cofactor.

The enzyme catalyses 4-CDP-2-C-methyl-D-erythritol 2-phosphate = 2-C-methyl-D-erythritol 2,4-cyclic diphosphate + CMP. It participates in isoprenoid biosynthesis; isopentenyl diphosphate biosynthesis via DXP pathway; isopentenyl diphosphate from 1-deoxy-D-xylulose 5-phosphate: step 4/6. Involved in the biosynthesis of isopentenyl diphosphate (IPP) and dimethylallyl diphosphate (DMAPP), two major building blocks of isoprenoid compounds. Catalyzes the conversion of 4-diphosphocytidyl-2-C-methyl-D-erythritol 2-phosphate (CDP-ME2P) to 2-C-methyl-D-erythritol 2,4-cyclodiphosphate (ME-CPP) with a corresponding release of cytidine 5-monophosphate (CMP). This is 2-C-methyl-D-erythritol 2,4-cyclodiphosphate synthase from Cellvibrio japonicus (strain Ueda107) (Pseudomonas fluorescens subsp. cellulosa).